Reading from the N-terminus, the 102-residue chain is Protein translation factor SUI1 homolog (102 aa).

The protein belongs to the SUI1 family.

This is Protein translation factor SUI1 homolog from Methanosarcina mazei (strain ATCC BAA-159 / DSM 3647 / Goe1 / Go1 / JCM 11833 / OCM 88) (Methanosarcina frisia).